The sequence spans 188 residues: Large ribosomal subunit protein uL5 (188 aa).

The protein belongs to the universal ribosomal protein uL5 family. Part of the 50S ribosomal subunit; contacts the 5S rRNA and probably tRNA. Forms a bridge to the 30S subunit in the 70S ribosome.

Functionally, this is one of the proteins that bind and probably mediate the attachment of the 5S RNA into the large ribosomal subunit, where it forms part of the central protuberance. In the 70S ribosome it contacts protein S13 of the 30S subunit (bridge B1b), connecting the 2 subunits; this bridge is implicated in subunit movement. May contact the P site tRNA; the 5S rRNA and some of its associated proteins might help stabilize positioning of ribosome-bound tRNAs. The sequence is that of Large ribosomal subunit protein uL5 from Pyrococcus abyssi (strain GE5 / Orsay).